The sequence spans 181 residues: Endoribonuclease YbeY (181 aa).

3 residues coordinate Zn(2+): His-115, His-119, and His-125.

Belongs to the endoribonuclease YbeY family. Requires Zn(2+) as cofactor.

It is found in the cytoplasm. Its function is as follows. Single strand-specific metallo-endoribonuclease involved in late-stage 70S ribosome quality control and in maturation of the 3' terminus of the 16S rRNA. The sequence is that of Endoribonuclease YbeY from Bifidobacterium adolescentis (strain ATCC 15703 / DSM 20083 / NCTC 11814 / E194a).